A 484-amino-acid polypeptide reads, in one-letter code: Rho guanine nucleotide exchange factor 35 (484 aa).

A disordered region spans residues 139–418 (FSSDLGSEEE…ALIAPEDSPH (280 aa)). Residue Ser-184 is modified to Phosphoserine. A compositionally biased stretch (low complexity) spans 217-237 (ESQGLLHPQEVQVLEEQGQQE). Basic and acidic residues predominate over residues 266–278 (NDEKGEQKQKQEQ). Positions 299-309 (GLNDGEWEQED) are enriched in acidic residues. Composition is skewed to basic and acidic residues over residues 323–368 (GEER…KEKG) and 394–404 (RSREEENEHHG).

This is Rho guanine nucleotide exchange factor 35 (ARHGEF35) from Homo sapiens (Human).